Here is a 311-residue protein sequence, read N- to C-terminus: Ornithine carbamoyltransferase (311 aa).

Residues 57-60 (STRT), Q84, R108, and 135-138 (HPCQ) contribute to the carbamoyl phosphate site. L-ornithine-binding positions include N166, D230, and 234–235 (SM). Carbamoyl phosphate-binding positions include 270-271 (CL) and R298.

Belongs to the aspartate/ornithine carbamoyltransferase superfamily. OTCase family.

The protein resides in the cytoplasm. The catalysed reaction is carbamoyl phosphate + L-ornithine = L-citrulline + phosphate + H(+). Its pathway is amino-acid biosynthesis; L-arginine biosynthesis; L-arginine from L-ornithine and carbamoyl phosphate: step 1/3. In terms of biological role, reversibly catalyzes the transfer of the carbamoyl group from carbamoyl phosphate (CP) to the N(epsilon) atom of ornithine (ORN) to produce L-citrulline. The polypeptide is Ornithine carbamoyltransferase (Carboxydothermus hydrogenoformans (strain ATCC BAA-161 / DSM 6008 / Z-2901)).